The chain runs to 210 residues: MSNNVEEKILHGTTTVGIKAKDGVVLCADMRASAGYFIANNNTMKIQKIDDHAGLTLAGGVADAQNIVDILRYHSNLHRVEKHGPISIHSLARLCSLIFHQNRGYPFMADILVGGYDAEGPALFNIDMFGSVEKKAYVTTGSGSPVAYGLLEEEYREDLTVEEAKKIALRAVKAAIVRNIGTGDGINIAIMDKDGFRLLTEEQKKAVIEL.

The propeptide at 1–12 (MSNNVEEKILHG) is removed in mature form; by autocatalysis. The active-site Nucleophile is the T13.

It belongs to the peptidase T1B family. In terms of assembly, the 20S proteasome core is composed of 14 alpha and 14 beta subunits that assemble into four stacked heptameric rings, resulting in a barrel-shaped structure. The two inner rings, each composed of seven catalytic beta subunits, are sandwiched by two outer rings, each composed of seven alpha subunits. The catalytic chamber with the active sites is on the inside of the barrel. Has a gated structure, the ends of the cylinder being occluded by the N-termini of the alpha-subunits. Is capped at one or both ends by the proteasome regulatory ATPase, PAN.

The protein resides in the cytoplasm. It carries out the reaction Cleavage of peptide bonds with very broad specificity.. With respect to regulation, the formation of the proteasomal ATPase PAN-20S proteasome complex, via the docking of the C-termini of PAN into the intersubunit pockets in the alpha-rings, triggers opening of the gate for substrate entry. Interconversion between the open-gate and close-gate conformations leads to a dynamic regulation of the 20S proteasome proteolysis activity. Its function is as follows. Component of the proteasome core, a large protease complex with broad specificity involved in protein degradation. The polypeptide is Proteasome subunit beta 2 (Nitrosopumilus maritimus (strain SCM1)).